The primary structure comprises 79 residues: Cell division protein ZapB (79 aa).

A coiled-coil region spans residues 4 to 78 (EVFEKLESKV…LRALLGKMEE (75 aa)).

The protein belongs to the ZapB family. As to quaternary structure, homodimer. The ends of the coiled-coil dimer bind to each other, forming polymers. Interacts with FtsZ.

It is found in the cytoplasm. Its function is as follows. Non-essential, abundant cell division factor that is required for proper Z-ring formation. It is recruited early to the divisome by direct interaction with FtsZ, stimulating Z-ring assembly and thereby promoting cell division earlier in the cell cycle. Its recruitment to the Z-ring requires functional FtsA or ZipA. This is Cell division protein ZapB from Serratia proteamaculans (strain 568).